The sequence spans 145 residues: D-aminoacyl-tRNA deacylase (145 aa).

A Gly-cisPro motif, important for rejection of L-amino acids motif is present at residues 137–138 (GP).

It belongs to the DTD family. Homodimer.

Its subcellular location is the cytoplasm. It catalyses the reaction glycyl-tRNA(Ala) + H2O = tRNA(Ala) + glycine + H(+). The enzyme catalyses a D-aminoacyl-tRNA + H2O = a tRNA + a D-alpha-amino acid + H(+). In terms of biological role, an aminoacyl-tRNA editing enzyme that deacylates mischarged D-aminoacyl-tRNAs. Also deacylates mischarged glycyl-tRNA(Ala), protecting cells against glycine mischarging by AlaRS. Acts via tRNA-based rather than protein-based catalysis; rejects L-amino acids rather than detecting D-amino acids in the active site. By recycling D-aminoacyl-tRNA to D-amino acids and free tRNA molecules, this enzyme counteracts the toxicity associated with the formation of D-aminoacyl-tRNA entities in vivo and helps enforce protein L-homochirality. The protein is D-aminoacyl-tRNA deacylase of Francisella tularensis subsp. novicida (strain U112).